The sequence spans 640 residues: Epithelial sodium channel subunit beta (640 aa).

Topologically, residues 1-50 (MHVKKYLLKGLHRLQKGPGYTYKELLVWYCDNTNTHGPKRIICEGPKKKA) are cytoplasmic. The helical transmembrane segment at 51–71 (MWFLLTLLFAALVCWQWGIFI) threads the bilayer. The Extracellular segment spans residues 72–532 (RTYLSWEVSV…GGQFGFWMGG (461 aa)). Disulfide bonds link cysteine 98/cysteine 272, cysteine 184/cysteine 189, cysteine 196/cysteine 203, cysteine 249/cysteine 256, cysteine 361/cysteine 448, cysteine 386/cysteine 444, cysteine 390/cysteine 440, cysteine 399/cysteine 426, and cysteine 401/cysteine 415. N-linked (GlcNAc...) asparagine glycosylation is present at asparagine 260. The helical transmembrane segment at 533-553 (SVLCLIEFGEIIIDFVWITII) threads the bilayer. Over 554–640 (KLVALAKSLR…IESDSEGDAI (87 aa)) the chain is Cytoplasmic. The tract at residues 590–640 (FQPDTAPRSPNTGPYPSEQALPIPGTPPPNYDSLRLQPLDVIESDSEGDAI) is disordered. The short motif at 616-620 (PPPNY) is the PY motif; recruits WW domain-containing proteins and is thereby required for ubiquitination and inhibition of the channel by NEDD4 and NEDD4L element. A compositionally biased stretch (acidic residues) spans 631–640 (IESDSEGDAI). 2 positions are modified to phosphoserine: serine 633 and serine 635.

The protein belongs to the amiloride-sensitive sodium channel (TC 1.A.6) family. SCNN1B subfamily. As to quaternary structure, component of the heterotrimeric epithelial sodium channel (ENaC) composed of an alpha/SCNN1A, a beta/SCNN1B and a gamma/SCNN1G subunit. An additional delta/SCNN1D subunit can replace the alpha/SCNN1A subunit to form an alternative channel with specific properties. Interacts with WWP1 (via WW domains). Interacts with WWP2 (via WW domains); inhibits the channel. Interacts with the full-length immature form of PCSK9 (pro-PCSK9); inhibits ENaC by promoting its proteasomal degradation. Interacts (N-glycosylated) with BPIFA1; the interaction is direct and inhibits the proteolytic processing of SCNN1A and SCNN1G and the activation of ENaC. Post-translationally, ubiquitinated. Can be ubiquitinated at multiple sites and undergo monoubiquitination and polyubiquitination. Ubiquitination by NEDD4 or NEDD4L inhibits the ENaC channel through endocytosis, intracellular retention and degradation of its individual subunits. However, some studies could not confirm the ubiquitination of this subunit of the ENaC. Phosphorylated on serine and threonine residues. Aldosterone and insulin increase the basal level of phosphorylation. In terms of processing, N-glycosylated. N-glycosylation is required for interaction with BPIFA1. As to expression, detected in placenta, lung and kidney. Expressed in kidney (at protein level).

It is found in the apical cell membrane. Its subcellular location is the cytoplasmic vesicle membrane. It carries out the reaction Na(+)(in) = Na(+)(out). With respect to regulation, originally identified and characterized by its inhibition by the diuretic drug amiloride. In terms of biological role, this is one of the three pore-forming subunits of the heterotrimeric epithelial sodium channel (ENaC), a critical regulator of sodium balance and fluid homeostasis. ENaC operates in epithelial tissues, where it mediates the electrodiffusion of sodium ions from extracellular fluid through the apical membrane of cells, with water following osmotically. It plays a key role in maintaining sodium homeostasis through electrogenic sodium reabsorption in the kidneys. Additionally, ENaC is essential for airway surface liquid homeostasis, which is crucial for proper mucus clearance. The sequence is that of Epithelial sodium channel subunit beta from Homo sapiens (Human).